A 412-amino-acid chain; its full sequence is Peptidase T (412 aa).

His-78 is a binding site for Zn(2+). The active site involves Asp-80. Residue Asp-140 coordinates Zn(2+). Glu-173 serves as the catalytic Proton acceptor. Zn(2+)-binding residues include Glu-174, Asp-196, and His-379.

The protein belongs to the peptidase M20B family. Zn(2+) serves as cofactor.

The protein resides in the cytoplasm. It carries out the reaction Release of the N-terminal residue from a tripeptide.. Cleaves the N-terminal amino acid of tripeptides. This chain is Peptidase T, found in Edwardsiella ictaluri (strain 93-146).